Reading from the N-terminus, the 858-residue chain is DNA replication licensing factor mcm4-A (858 aa).

Positions 1-125 (MSSPTSTPSR…ARKVKQVDLH (125 aa)) are disordered. Composition is skewed to polar residues over residues 54-68 (SPSG…SSPA) and 79-94 (LDLS…SSRV). Residues 301-326 (CQVCAFTTRVEIDRGRIAEPSVCKHC) form a C4-type zinc finger. An MCM domain is found at 453–662 (IYERLAAALA…YDRRLAHHLV (210 aa)). Tyr-466, Arg-492, Lys-511, Ser-512, Asn-613, Arg-638, Arg-727, and Glu-730 together coordinate ATP. The Arginine finger motif lies at 637–640 (SRFD).

Belongs to the MCM family. As to quaternary structure, component of the mcm2-7 complex (RLF-M). The complex forms a toroidal hexameric ring with the proposed subunit order mcm2-mcm6-mcm4-mcm7-mcm3-mcm5. The heterodimer of mmcm3/mcm5 interacts with mcm4, mmcm6, mcm7 and weakly with mcm2. Component of the CMG helicase complex, composed of the mcm2-7 complex, the GINS complex and cdc45. Post-translationally, hyperphosphorylated during mitosis in a mechanism requiring cdc2-cyclin B and other kinases. Undergoes dephosphorylation after exiting mitosis, existing in a partially phosphorylated state in the cytosolic interphase mcm complex which associates with the pre-replication complexes (pre-Rcs). Complete dephosphorylation inactivates the mcm complex, preventing its binding to chromatin. Becomes actively phosphorylated during S phase once the mcm complex is assembled on the chromatin. This chromatin-associated phosphorylation occurs during the activation of the pre-Rcs and is independent of cdks. Phosphorylated by the cdc7-dbf4b complex.

The protein localises to the nucleus. It is found in the chromosome. It catalyses the reaction ATP + H2O = ADP + phosphate + H(+). In terms of biological role, acts as a component of the MCM2-7 complex (MCM complex) which is the replicative helicase essential for 'once per cell cycle' DNA replication initiation and elongation in eukaryotic cells. Core component of CDC45-MCM-GINS (CMG) helicase, the molecular machine that unwinds template DNA during replication, and around which the replisome is built. The active ATPase sites in the MCM2-7 ring are formed through the interaction surfaces of two neighboring subunits such that a critical structure of a conserved arginine finger motif is provided in trans relative to the ATP-binding site of the Walker A box of the adjacent subunit. The six ATPase active sites, however, are likely to contribute differentially to the complex helicase activity. The chain is DNA replication licensing factor mcm4-A (mcm4-a) from Xenopus laevis (African clawed frog).